The following is a 456-amino-acid chain: Phospholipase A1 member A (456 aa).

Positions 1-25 (MPPGPWESCFWVGGLLLWLSVGSSG) are cleaved as a signal peptide. Ser166 (nucleophile) is an active-site residue. The active-site Charge relay system is the Asp190. A disulfide bond links Cys245 and Cys258. His260 (charge relay system) is an active-site residue. Disulfide bonds link Cys282-Cys293 and Cys296-Cys304. N-linked (GlcNAc...) asparagine glycosylation occurs at Asn365.

The protein belongs to the AB hydrolase superfamily. Lipase family.

The protein resides in the secreted. It carries out the reaction a 1,2-diacyl-sn-glycero-3-phospho-L-serine + H2O = a 2-acyl-sn-glycero-3-phospho-L-serine + a fatty acid + H(+). The enzyme catalyses 1,2-di-(9Z)-octadecenoyl-sn-glycero-3-phospho-L-serine + H2O = 2-(9Z-octadecenoyl)-sn-glycero-3-phospho-L-serine + (9Z)-octadecenoate + H(+). It catalyses the reaction 1-hexadecanoyl-2-(5Z,8Z,11Z,14Z-eicosatetraenoyl)-sn-glycero-3-phospho-L-serine + H2O = 2-(5Z,8Z,11Z,14Z)-eicosatetraenoyl-sn-glycero-3-phospho-L-serine + hexadecanoate + H(+). The catalysed reaction is a 1-acyl-sn-glycero-3-phospho-L-serine + H2O = sn-glycero-3-phospho-L-serine + a fatty acid + H(+). It carries out the reaction 1-(9Z-octadecenoyl)-sn-glycero-3-phospho-L-serine + H2O = sn-glycero-3-phospho-L-serine + (9Z)-octadecenoate + H(+). Functionally, hydrolyzes the ester bond of the acyl group attached at the sn-1 position of phosphatidylserines (phospholipase A1 activity) and 1-acyl-2-lysophosphatidylserines (lysophospholipase activity) in the pathway of phosphatidylserines acyl chain remodeling. Cleaves phosphatidylserines exposed on the outer leaflet of the plasma membrane of apoptotic cells producing 2-acyl-1-lysophosphatidylserines, which in turn enhance mast cell activation and histamine production. Has no activity toward other glycerophospholipids including phosphatidylcholines, phosphatidylethanolamines, phosphatidic acids or phosphatidylinositols, or glycerolipids such as triolein. The sequence is that of Phospholipase A1 member A (PLA1A) from Pongo abelii (Sumatran orangutan).